The sequence spans 362 residues: Probable endopolygalacturonase II (362 aa).

A signal peptide spans 1 to 20; that stretch reads MHSFASLLAYGLAAGATLAS. Residues 21-27 constitute a propeptide that is removed on maturation; it reads ASPIEAR. Cys-30 and Cys-45 are oxidised to a cystine. One copy of the PbH1 1 repeat lies at 156 to 186; it reads SDDITLTDITINNADGDSLGGHNTDAFDVGN. The Proton donor role is filled by Asp-201. A disulfide bridge connects residues Cys-203 and Cys-219. 4 PbH1 repeats span residues 209 to 229, 238 to 259, 267 to 289, and 301 to 322; these read GENI…SIGS, VKNV…RIKT, VSEI…VIQQ, and TNGV…DSKA. The active site involves His-223. Asn-240 is a glycosylation site (N-linked (GlcNAc...) asparagine). Intrachain disulfides connect Cys-329–Cys-334 and Cys-353–Cys-362.

Belongs to the glycosyl hydrolase 28 family.

Its subcellular location is the secreted. It catalyses the reaction (1,4-alpha-D-galacturonosyl)n+m + H2O = (1,4-alpha-D-galacturonosyl)n + (1,4-alpha-D-galacturonosyl)m.. Its function is as follows. Involved in maceration and soft-rotting of plant tissue. Hydrolyzes the 1,4-alpha glycosidic bonds of de-esterified pectate in the smooth region of the plant cell wall. The polypeptide is Probable endopolygalacturonase II (pgaII) (Aspergillus kawachii (strain NBRC 4308) (White koji mold)).